The primary structure comprises 1559 residues: Arginine-glutamic acid dipeptide repeats protein (1559 aa).

Positions 1-36 (MTADKDKDKDKEKDRDRDRDRERDKRDKARESENAR) are enriched in basic and acidic residues. Positions 1–89 (MTADKDKDKD…KKKSRYERTD (89 aa)) are disordered. 2 positions are modified to phosphoserine: Ser-53 and Ser-56. Basic residues predominate over residues 73–84 (KSRKKPPKKKSR). Residues 102–282 (VVYRPGDCVY…PETRRLNSTQ (181 aa)) enclose the BAH domain. Thr-119 carries the post-translational modification Phosphothreonine. Ser-141 and Ser-303 each carry phosphoserine. In terms of domain architecture, ELM2 spans 283–386 (GEIRVGPSHQ…KALQRLVKKP (104 aa)). One can recognise an SANT domain in the interval 390–442 (LIEKCWTEDEVKRFVKGLRQYGKNFFRIRKELLPNKETGELITFYYYWKKTPE). Residues 463 to 494 (TRTASTPVNTPSRPPSSEFLDLSSASEDDFDS) are disordered. Positions 464–473 (RTASTPVNTP) are enriched in polar residues. The span at 478-487 (SSEFLDLSSA) shows a compositional bias: low complexity. Residues 507–532 (RHCFTTTSKDWHHGGRENILLCTDCR) form a GATA-type zinc finger. Positions 541 to 1125 (LPPIEKPVDP…PSHASQSARF (585 aa)) are disordered. Lys-559 is covalently cross-linked (Glycyl lysine isopeptide (Lys-Gly) (interchain with G-Cter in SUMO2)). Phosphoserine is present on residues Ser-593, Ser-599, and Ser-612. The segment covering 608–622 (SGRNSPSAASTSSND) has biased composition (low complexity). Basic and acidic residues predominate over residues 623 to 639 (SKAEAVKKSAKKVKEEA). Lys-636 is covalently cross-linked (Glycyl lysine isopeptide (Lys-Gly) (interchain with G-Cter in SUMO2)). Phosphoserine occurs at positions 641, 655, 674, and 678. The span at 651 to 672 (EKVASDTEDTDRATSKKTKTQE) shows a compositional bias: basic and acidic residues. Over residues 687–707 (SDSRSVNDEGSSDPKDIDQDN) the composition is skewed to basic and acidic residues. A compositionally biased stretch (polar residues) spans 708–735 (RSTSPSIPSPQDNESDSDSSAQQQMLQT). Positions 736 to 761 (QPPALQAPSGAASAPSTAPPGTTQLP) are enriched in low complexity. A compositionally biased stretch (polar residues) spans 768–791 (SATTVPPQGSPATSQPPNQTQSTV). Residues 805-822 (LHPPRLPSPHPPLQPMTA) are compositionally biased toward pro residues. Positions 890–900 (QLPASQSALQP) are enriched in low complexity. Residues 901–931 (QQPPREQPLPPAPLAMPHIKPPPTTPIPQLP) show a composition bias toward pro residues. The segment covering 961–971 (KPLSSLSTHHP) has biased composition (low complexity). Residues 1027–1053 (PQHPFVPGGPPPITPPSCPPTSTPPAG) are compositionally biased toward pro residues. The span at 1054–1068 (PSSSSQPPCSAAVSS) shows a compositional bias: low complexity. Phosphoserine occurs at positions 1098, 1105, and 1107. Residues 1098–1109 (SPPPPPRSPSPE) are compositionally biased toward pro residues. Thr-1111 bears the Phosphothreonine mark. Positions 1148-1205 (GSKLAKKREEAIEKAKREAEQKAREEREREKEKEKEREREREREREAERAAQKASSSA) form a coiled coil. An N6-acetyllysine modification is found at Lys-1150. Residues 1154–1198 (KREEAIEKAKREAEQKAREEREREKEKEKEREREREREREAERAA) are compositionally biased toward basic and acidic residues. The segment at 1154–1239 (KREEAIEKAK…TTIAAVPPYI (86 aa)) is disordered. Residue Tyr-1252 is modified to Phosphotyrosine. Residue Ser-1259 is modified to Phosphoserine.

In terms of assembly, interacts with HDAC1 and ATN1. Interaction with ATN1 is improved when the poly-Gln region of ATN1 is extended. As to expression, widely expressed.

The protein resides in the nucleus. Its subcellular location is the PML body. Its function is as follows. Plays a role as a transcriptional repressor during development. May play a role in the control of cell survival. Interacts with FAT1. The sequence is that of Arginine-glutamic acid dipeptide repeats protein (Rere) from Rattus norvegicus (Rat).